Consider the following 472-residue polypeptide: Membrane-bound acylglycerophosphatidylinositol O-acyltransferase MBOAT7 (472 aa).

Over 1 to 5 (MSPEE) the chain is Cytoplasmic. The helical transmembrane segment at 6 to 22 (WTYLVVLLISIPIGFLF) threads the bilayer. The Lumenal portion of the chain corresponds to 23–33 (KKAGPGLKRWG). The chain crosses the membrane as a helical span at residues 34–57 (AAAVGLGLTLFTCGPHTLHSLVTI). Topologically, residues 58–73 (LGTWALIQAQPCSCHA) are cytoplasmic. A helical transmembrane segment spans residues 74 to 93 (LALAWTFSYLLFFRALSLLG). The Lumenal segment spans residues 94–194 (LPTPTPFTNA…VPSLRPLLRR (101 aa)). Residues 195–212 (AWPAPLFGLLFLLSSHLF) traverse the membrane as a helical segment. Over 213-231 (PLEAVREDAFYARPLPARL) the chain is Cytoplasmic. A helical membrane pass occupies residues 232 to 261 (FYMIPVFFAFRMRFYVAWIAAECGCIAAGF). Over 262–426 (GAYPVAAKAR…LSLADTLRYW (165 aa)) the chain is Lumenal. Residue asparagine 321 is glycosylated (N-linked (GlcNAc...) asparagine). Residues 427–447 (ASIYFCIHFLALAALGLGLAL) traverse the membrane as a helical segment. Topologically, residues 448-472 (GGGSPSRRKAASQPTSLAPEKLREE) are cytoplasmic. The tract at residues 453–472 (SRRKAASQPTSLAPEKLREE) is disordered.

It belongs to the membrane-bound acyltransferase family. In terms of assembly, interacts with SPTSSA; the interaction facilitates MBOAT7 location to mitochondria-associated membranes (MAMs). In terms of tissue distribution, overexpressed in metastatic breast and bladder carcinomas relative to normal breast epithelium and urothelium.

The protein localises to the endoplasmic reticulum membrane. The catalysed reaction is a 1-acyl-sn-glycero-3-phospho-(1D-myo-inositol) + (5Z,8Z,11Z,14Z)-eicosatetraenoyl-CoA = a 1-acyl-2-(5Z,8Z,11Z,14Z-eicosatetraenoyl)-sn-glycero-3-phospho-(1D-myo-inositol) + CoA. It catalyses the reaction (5Z,8Z,11Z,14Z)-eicosatetraenoyl-CoA + 1-hexadecanoyl-sn-glycero-3-phosphocholine = 1-hexadecanoyl-2-(5Z,8Z,11Z,14Z-eicosatetraenoyl)-sn-glycero-3-phosphocholine + CoA. The enzyme catalyses a 1-acyl-sn-glycero-3-phospho-(1D-myo-inositol) + an acyl-CoA = a 1,2-diacyl-sn-glycero-3-phospho-(1D-myo-inositol) + CoA. It carries out the reaction 1-octadecanoyl-sn-glycero-3-phospho-(1D-myo-inositol) + (5Z,8Z,11Z,14Z)-eicosatetraenoyl-CoA = 1-octadecanoyl-2-(5Z,8Z,11Z,14Z-eicosatetraenoyl)-sn-glycero-3-phospho-(1D-myo-inositol) + CoA. It functions in the pathway lipid metabolism; phospholipid metabolism. Its activity is regulated as follows. Activity is inhibited by thimerosal. Its function is as follows. Acyltransferase which catalyzes the transfer of an acyl group from an acyl-CoA to a lysophosphatidylinositol (1-acylglycerophosphatidylinositol or LPI) leading to the production of a phosphatidylinositol (1,2-diacyl-sn-glycero-3-phosphoinositol or PI) and participates in the reacylation step of the phospholipid remodeling pathway also known as the Lands cycle. Prefers arachidonoyl-CoA as the acyl donor, thus contributing to the regulation of free levels arachidonic acid in cell. In liver, participates in the regulation of triglyceride metabolism through the phosphatidylinositol acyl-chain remodeling regulation. In Homo sapiens (Human), this protein is Membrane-bound acylglycerophosphatidylinositol O-acyltransferase MBOAT7.